The following is a 477-amino-acid chain: 3-succinoylsemialdehyde-pyridine dehydrogenase (477 aa).

G202 to G208 contacts NAD(+). Catalysis depends on residues E246 and C280.

The protein belongs to the aldehyde dehydrogenase family.

The enzyme catalyses 4-oxo-4-(pyridin-3-yl)butanal + NADP(+) + H2O = 4-oxo-4-(pyridin-3-yl)butanoate + NADPH + 2 H(+). It functions in the pathway alkaloid degradation; nicotine degradation. Catalyzes the dehydrogenation of 3-succinoylsemialdehyde-pyridine to 3-succinoyl-pyridine in the nicotine degradation pathway. This chain is 3-succinoylsemialdehyde-pyridine dehydrogenase (ald), found in Pseudomonas sp.